The following is a 316-amino-acid chain: Pantothenate kinase (316 aa).

95–102 (GSVAVGKS) lines the ATP pocket.

It belongs to the prokaryotic pantothenate kinase family.

Its subcellular location is the cytoplasm. It carries out the reaction (R)-pantothenate + ATP = (R)-4'-phosphopantothenate + ADP + H(+). It functions in the pathway cofactor biosynthesis; coenzyme A biosynthesis; CoA from (R)-pantothenate: step 1/5. The chain is Pantothenate kinase from Hamiltonella defensa subsp. Acyrthosiphon pisum (strain 5AT).